A 193-amino-acid chain; its full sequence is MHSRFIAVTLASLSLASQAVAWGCIGQDCNQAADQIAFSAPEPASYEGKVKSLAWEPTPGQGWQWSSCGTGDEVVNVESIVVSPDPPVPGQNLTVRAKGTVKDEVSDGTFADVIVKLGLIRLLARRFDVCEQARESNADLQCPLSAGEYELEHTVALPREIPPGKFNVHITGENQDGSNLLCLDLSIQFGFRR.

An N-terminal signal peptide occupies residues 1 to 21 (MHSRFIAVTLASLSLASQAVA). The propeptide occupies 22-54 (WGCIGQDCNQAADQIAFSAPEPASYEGKVKSLA).

The protein belongs to the NPC2 family. As to quaternary structure, monomer.

Its function is as follows. Catalyzes the intermembrane transfer of phosphatidylglycerol and phosphatidylinositol. This chain is Phosphatidylglycerol/phosphatidylinositol transfer protein (NPC2), found in Mycosarcoma maydis (Corn smut fungus).